The following is a 478-amino-acid chain: Keratin, type II cytoskeletal 8 (478 aa).

The interval 1–97 is head; the sequence is MSIRVTQKSY…DPNIQAVRTQ (97 aa). A Phosphoserine; by PKC/PRKCE modification is found at Ser-9. Lys-11 is covalently cross-linked (Glycyl lysine isopeptide (Lys-Gly) (interchain with G-Cter in SUMO2)). Residues Ser-13, Ser-15, Ser-21, and Ser-22 each carry the phosphoserine modification. Residues 16 to 44 form a disordered region; that stretch reads APRSFSSRSYTSGPGSRISSSAFSRVGSS. Arg-23 carries the omega-N-methylarginine modification. The residue at position 24 (Ser-24) is a Phosphoserine; by PKC/PRKCE. The residue at position 26 (Thr-26) is a Phosphothreonine. Phosphoserine occurs at positions 27 and 31. The residue at position 32 (Arg-32) is an Omega-N-methylarginine. 2 positions are modified to phosphoserine: Ser-34 and Ser-39. Arg-40 bears the Omega-N-methylarginine mark. Ser-43 and Ser-44 each carry phosphoserine. An Asymmetric dimethylarginine; alternate modification is found at Arg-48. Arg-48 is subject to Omega-N-methylarginine; alternate. Residue Ser-81 is modified to Phosphoserine; by MAPK. Residues 98–133 form a coil 1A region; it reads EKEQIKTLNNKFASFIDKVRHLEQQNKVLETKWNLL. In terms of domain architecture, IF rod spans 98-409; sequence EKEQIKTLNN…KLLEGEESRL (312 aa). Lys-108 bears the N6-malonyllysine mark. Residues Lys-129 and Lys-137 each participate in a glycyl lysine isopeptide (Lys-Gly) (interchain with G-Cter in SUMO2) cross-link. A linker 1 region spans residues 134 to 150; the sequence is QQQKTARSNIDNMFESY. The coil 1B stretch occupies residues 151–242; it reads INNLRRQLET…QLYEEEIREM (92 aa). Lys-204 is covalently cross-linked (Glycyl lysine isopeptide (Lys-Gly) (interchain with G-Cter in SUMO1); alternate). A Glycyl lysine isopeptide (Lys-Gly) (interchain with G-Cter in SUMO2); alternate cross-link involves residue Lys-204. Lys-214 carries the N6-acetyllysine modification. At Tyr-235 the chain carries Phosphotyrosine. The segment at 243 to 266 is linker 12; that stretch reads QSQISDTSVVLEMDNNRNLDLDGI. Residues 267-405 form a coil 2 region; the sequence is IAEVKAQYEE…ATYRKLLEGE (139 aa). Positions 268–389 are necessary for interaction with PNN; the sequence is AEVKAQYEEI…EYQELMNVKL (122 aa). Residue Lys-271 forms a Glycyl lysine isopeptide (Lys-Gly) (interchain with G-Cter in SUMO2) linkage. Ser-281 carries the post-translational modification Phosphoserine. Lys-292 is covalently cross-linked (Glycyl lysine isopeptide (Lys-Gly) (interchain with G-Cter in SUMO2)). Residue Lys-302 forms a Glycyl lysine isopeptide (Lys-Gly) (interchain with G-Cter in SUMO2); alternate linkage. Lys-302 carries the N6-acetyllysine; alternate modification. Residue Lys-311 forms a Glycyl lysine isopeptide (Lys-Gly) (interchain with G-Cter in SUMO2) linkage. Residue Lys-332 forms a Glycyl lysine isopeptide (Lys-Gly) (interchain with G-Cter in SUMO2); alternate linkage. Lys-332 is modified (N6-acetyllysine; alternate). Phosphoserine is present on Ser-337. Residue Lys-400 forms a Glycyl lysine isopeptide (Lys-Gly) (interchain with G-Cter in SUMO2) linkage. Residues 406–478 form a tail region; that stretch reads ESRLESGMQN…VSESSDVLSK (73 aa). Ser-407, Ser-411, Ser-417, Ser-424, and Ser-433 each carry phosphoserine. A Glycyl lysine isopeptide (Lys-Gly) (interchain with G-Cter in SUMO1); alternate cross-link involves residue Lys-467. A Glycyl lysine isopeptide (Lys-Gly) (interchain with G-Cter in SUMO2); alternate cross-link involves residue Lys-467. Residues Ser-470, Ser-472, Ser-473, and Ser-477 each carry the phosphoserine modification.

The protein belongs to the intermediate filament family. In terms of assembly, heterotetramer of two type I and two type II keratins. Forms a heterodimer with KRT18. Associates with KRT20. Interacts with PNN. When associated with KRT19, interacts with DMD. Interacts with TCHP. Interacts with APEX1. Interacts with GPER1. Interacts with EPPK1. Interacts with PKP1 and PKP2. Post-translationally, O-glycosylated. O-GlcNAcylation at multiple sites increases solubility, and decreases stability by inducing proteasomal degradation. In terms of processing, O-glycosylated (O-GlcNAcylated), in a cell cycle-dependent manner. Expressed in bladder, liver, exocervix and (in very low amounts) esophagus.

It is found in the cytoplasm. The protein resides in the nucleus. It localises to the nucleoplasm. Its subcellular location is the nucleus matrix. Its function is as follows. Together with KRT19, helps to link the contractile apparatus to dystrophin at the costameres of striated muscle. The chain is Keratin, type II cytoskeletal 8 (KRT8) from Bos taurus (Bovine).